Reading from the N-terminus, the 116-residue chain is Aspartate 1-decarboxylase (116 aa).

Serine 25 acts as the Schiff-base intermediate with substrate; via pyruvic acid in catalysis. Serine 25 carries the pyruvic acid (Ser) modification. A substrate-binding site is contributed by threonine 57. Tyrosine 58 (proton donor) is an active-site residue. A substrate-binding site is contributed by 73-75 (GAA).

This sequence belongs to the PanD family. As to quaternary structure, heterooctamer of four alpha and four beta subunits. The cofactor is pyruvate. In terms of processing, is synthesized initially as an inactive proenzyme, which is activated by self-cleavage at a specific serine bond to produce a beta-subunit with a hydroxyl group at its C-terminus and an alpha-subunit with a pyruvoyl group at its N-terminus.

The protein localises to the cytoplasm. The catalysed reaction is L-aspartate + H(+) = beta-alanine + CO2. Its pathway is cofactor biosynthesis; (R)-pantothenate biosynthesis; beta-alanine from L-aspartate: step 1/1. Catalyzes the pyruvoyl-dependent decarboxylation of aspartate to produce beta-alanine. This Leptospira interrogans serogroup Icterohaemorrhagiae serovar Lai (strain 56601) protein is Aspartate 1-decarboxylase.